Reading from the N-terminus, the 27-residue chain is thr operon leader peptide (27 aa).

It belongs to the thr operon leader peptide family.

This protein is involved in control of the biosynthesis of threonine. The protein is thr operon leader peptide of Escherichia coli O157:H7.